A 684-amino-acid polypeptide reads, in one-letter code: Methionine--tRNA ligase (684 aa).

A 'HIGH' region motif is present at residues P17–H27. Residues C148, C151, C160, and C164 each coordinate Zn(2+). Positions T330–S334 match the 'KMSKS' region motif. K333 contacts ATP. Positions D582 to H684 constitute a tRNA-binding domain.

The protein belongs to the class-I aminoacyl-tRNA synthetase family. MetG type 1 subfamily. Homodimer. Requires Zn(2+) as cofactor.

It is found in the cytoplasm. The catalysed reaction is tRNA(Met) + L-methionine + ATP = L-methionyl-tRNA(Met) + AMP + diphosphate. Functionally, is required not only for elongation of protein synthesis but also for the initiation of all mRNA translation through initiator tRNA(fMet) aminoacylation. This is Methionine--tRNA ligase from Methanococcoides burtonii (strain DSM 6242 / NBRC 107633 / OCM 468 / ACE-M).